Here is a 353-residue protein sequence, read N- to C-terminus: D-alanine--D-alanine ligase (353 aa).

The region spanning 141-349 (KAAFAAAGLP…LEELVSQLVI (209 aa)) is the ATP-grasp domain. 176–231 (EAKLKYPCFVKPANLGSSVGISKAQNRNELLIGLDKAASLDRRIVVEQGVSARELE) contacts ATP. Residues Asp302, Glu316, and Asn318 each coordinate Mg(2+).

The protein belongs to the D-alanine--D-alanine ligase family. Mg(2+) serves as cofactor. The cofactor is Mn(2+).

It is found in the cytoplasm. The enzyme catalyses 2 D-alanine + ATP = D-alanyl-D-alanine + ADP + phosphate + H(+). It functions in the pathway cell wall biogenesis; peptidoglycan biosynthesis. Cell wall formation. The chain is D-alanine--D-alanine ligase from Prochlorococcus marinus (strain MIT 9303).